The sequence spans 307 residues: Probable 2-methylisocitrate lyase 2 (307 aa).

53 to 55 (SGA) contacts substrate. Asp92 and Asp94 together coordinate Mg(2+). Residues 129–130 (CG), Arg164, Glu194, 216–218 (NMT), Arg247, and Arg276 each bind substrate.

The protein belongs to the isocitrate lyase/PEP mutase superfamily. Methylisocitrate lyase family. Homotetramer; dimer of dimers. The cofactor is Mg(2+).

It catalyses the reaction (2S,3R)-3-hydroxybutane-1,2,3-tricarboxylate = pyruvate + succinate. It functions in the pathway organic acid metabolism; propanoate degradation. In terms of biological role, involved in the catabolism of short chain fatty acids (SCFA) via the 2-methylcitrate cycle I (propionate degradation route). Catalyzes the thermodynamically favored C-C bond cleavage of (2R,3S)-2-methylisocitrate to yield pyruvate and succinate via an alpha-carboxy-carbanion intermediate. The polypeptide is Probable 2-methylisocitrate lyase 2 (Corynebacterium glutamicum (strain ATCC 13032 / DSM 20300 / JCM 1318 / BCRC 11384 / CCUG 27702 / LMG 3730 / NBRC 12168 / NCIMB 10025 / NRRL B-2784 / 534)).